A 371-amino-acid polypeptide reads, in one-letter code: Rab9 effector protein with kelch motifs (371 aa).

Kelch repeat units lie at residues 47 to 93, 98 to 144, 149 to 201, 202 to 251, 252 to 301, and 348 to 371; these read RVLL…FLSA, RLWV…TSSA, CLYV…AVGT, KLFI…VFKD, HLYI…VIPW, and LLLI…SLIE.

Its function is as follows. Rab9 effector required for endosome to trans-Golgi network (TGN) transport. This Gallus gallus (Chicken) protein is Rab9 effector protein with kelch motifs (RABEPK).